Here is a 186-residue protein sequence, read N- to C-terminus: Auxin-responsive protein IAA4 (186 aa).

The EAR-like (transcriptional repression) motif lies at 18 to 22 (LRLGL). The segment at 25–62 (TEETVSCGKSNKRVLPEATEKEIESTGKTETASPPKAQ) is disordered. Residues 38 to 51 (VLPEATEKEIESTG) are compositionally biased toward basic and acidic residues. The region spanning 88–175 (GNYVKVSMDG…SCKRLRIMKG (88 aa)) is the PB1 domain.

Belongs to the Aux/IAA family. In terms of assembly, homodimers and heterodimers. Interacts with TPL. In terms of tissue distribution, preferentially expressed in stems, leaves and flowers.

The protein resides in the nucleus. In terms of biological role, aux/IAA proteins are short-lived transcriptional factors that function as repressors of early auxin response genes at low auxin concentrations. Repression is thought to result from the interaction with auxin response factors (ARFs), proteins that bind to the auxin-responsive promoter element (AuxRE). Formation of heterodimers with ARF proteins may alter their ability to modulate early auxin response genes expression. In Arabidopsis thaliana (Mouse-ear cress), this protein is Auxin-responsive protein IAA4 (IAA4).